The sequence spans 375 residues: Chaperone protein DnaJ (375 aa).

The region spanning 6–71 (DYYEVLGVPK…EKRRQYDQFG (66 aa)) is the J domain. The CR-type zinc finger occupies 138-220 (GTTKKIDVTL…CYGTGYISSK (83 aa)). The Zn(2+) site is built by Cys151, Cys154, Cys168, Cys171, Cys194, Cys197, Cys208, and Cys211. CXXCXGXG motif repeat units follow at residues 151 to 158 (CSSCHGTG), 168 to 175 (CSKCGGRG), 194 to 201 (CPDCHGTG), and 208 to 215 (CPDCYGTG).

Belongs to the DnaJ family. Homodimer. The cofactor is Zn(2+).

Its subcellular location is the cytoplasm. Its function is as follows. Participates actively in the response to hyperosmotic and heat shock by preventing the aggregation of stress-denatured proteins and by disaggregating proteins, also in an autonomous, DnaK-independent fashion. Unfolded proteins bind initially to DnaJ; upon interaction with the DnaJ-bound protein, DnaK hydrolyzes its bound ATP, resulting in the formation of a stable complex. GrpE releases ADP from DnaK; ATP binding to DnaK triggers the release of the substrate protein, thus completing the reaction cycle. Several rounds of ATP-dependent interactions between DnaJ, DnaK and GrpE are required for fully efficient folding. Also involved, together with DnaK and GrpE, in the DNA replication of plasmids through activation of initiation proteins. The chain is Chaperone protein DnaJ from Lachnospira eligens (strain ATCC 27750 / DSM 3376 / VPI C15-48 / C15-B4) (Eubacterium eligens).